The sequence spans 266 residues: Signal peptidase I (266 aa).

The Cytoplasmic segment spans residues 1 to 20 (MQTDNTKSNTNKTAKQEWGS). The chain crosses the membrane as a helical span at residues 21–41 (FAFVICIALLIRILIMEPFTV). The Periplasmic portion of the chain corresponds to 42 to 266 (PTGSMKATIL…IFRNLYSTDE (225 aa)). Active-site residues include serine 45 and lysine 108.

This sequence belongs to the peptidase S26 family.

It localises to the cell inner membrane. It carries out the reaction Cleavage of hydrophobic, N-terminal signal or leader sequences from secreted and periplasmic proteins.. This Rickettsia felis (strain ATCC VR-1525 / URRWXCal2) (Rickettsia azadi) protein is Signal peptidase I (lepB).